A 155-amino-acid polypeptide reads, in one-letter code: Ribosomal RNA large subunit methyltransferase H 1 (155 aa).

S-adenosyl-L-methionine contacts are provided by residues Leu-76, Gly-108, and 127–132 (FSKMTF).

It belongs to the RNA methyltransferase RlmH family. In terms of assembly, homodimer.

The protein resides in the cytoplasm. The catalysed reaction is pseudouridine(1915) in 23S rRNA + S-adenosyl-L-methionine = N(3)-methylpseudouridine(1915) in 23S rRNA + S-adenosyl-L-homocysteine + H(+). Specifically methylates the pseudouridine at position 1915 (m3Psi1915) in 23S rRNA. The protein is Ribosomal RNA large subunit methyltransferase H 1 of Thermoanaerobacter pseudethanolicus (strain ATCC 33223 / 39E) (Clostridium thermohydrosulfuricum).